A 368-amino-acid chain; its full sequence is MPDIVNRKVEHVEIAAFENVDGLSSSTFLNDVILVHQGFPGISFSEINTKTKFFRKEISAPIMVTGMTGGRNELGRINRIIAEVAEKFGIPMGVGSQRVAIEKAEARESFTIVRKVAPTIPIIANLGMPQLVKGYGLKEFQDAIQMIEADAIAVHLNPAQEVFQPEGEPEYQIYALERLRDISKELSVPIIVKESGNGISMETAKLLYSYGIKNFDTSGQGGTNWIAIEMIRDIRRGNWKAESAKNFLDWGVPTAASIIEVRYSIPDAFLVGSGGIRSGLDAAKAIALGADIAGMALPVLKSAIEGKESLEQFFRKIIFELKATMMLTGSKNVEALKRSSIVILGKLKEWAEYRGINLSIYEKVRKRE.

Residue 7 to 8 coordinates substrate; the sequence is RK. FMN contacts are provided by residues threonine 65, 66-68, serine 96, and asparagine 125; that span reads GMT. A substrate-binding site is contributed by 96–98; the sequence is SQR. Residue glutamine 160 participates in substrate binding. Glutamate 161 is a binding site for Mg(2+). Residues lysine 193, serine 218, threonine 223, 275-277, and 296-297 each bind FMN; these read GIR and AL.

The protein belongs to the IPP isomerase type 2 family. In terms of assembly, homooctamer. Dimer of tetramers. It depends on FMN as a cofactor. NADPH serves as cofactor. Mg(2+) is required as a cofactor.

Its subcellular location is the cytoplasm. The enzyme catalyses isopentenyl diphosphate = dimethylallyl diphosphate. In terms of biological role, involved in the biosynthesis of isoprenoids. Catalyzes the 1,3-allylic rearrangement of the homoallylic substrate isopentenyl (IPP) to its allylic isomer, dimethylallyl diphosphate (DMAPP). The polypeptide is Isopentenyl-diphosphate delta-isomerase (Saccharolobus solfataricus (strain ATCC 35092 / DSM 1617 / JCM 11322 / P2) (Sulfolobus solfataricus)).